Consider the following 185-residue polypeptide: CASP-like protein 5A1 (185 aa).

Over 1–48 the chain is Cytoplasmic; sequence MNVSHPAVHPVGVPPALGGQAVPPRMRMRVRMEYLVFQGMPLPGSLGG. Residues 49–69 traverse the membrane as a helical segment; the sequence is LMLRLGQFCSALIAFSVMVSI. Over 70–76 the chain is Extracellular; sequence RDFSVTA. Residues 77-97 form a helical membrane-spanning segment; the sequence is FCYLLAATVLQCLWSLALAVI. Topologically, residues 98–121 are cytoplasmic; the sequence is DVYALLVKRSLRNPLLVSIFVVGD. Residues 122 to 142 traverse the membrane as a helical segment; that stretch reads GVTATLTFAAACASAGVVVLI. The Extracellular segment spans residues 143–160; that stretch reads GNDISMCKSNPCANYEAA. Residues 161-181 traverse the membrane as a helical segment; it reads IIMAFLSWFMVSISFVLTFWM. Residues 182–185 are Cytoplasmic-facing; the sequence is LATL.

The protein belongs to the Casparian strip membrane proteins (CASP) family. Homodimer and heterodimers.

Its subcellular location is the cell membrane. This chain is CASP-like protein 5A1, found in Pinus contorta (Shore pine).